Reading from the N-terminus, the 445-residue chain is Trigger factor (445 aa).

A PPIase FKBP-type domain is found at 162–247; it reads GDQVTIDAIG…IKAVHTAEPT (86 aa).

Belongs to the FKBP-type PPIase family. Tig subfamily.

Its subcellular location is the cytoplasm. The enzyme catalyses [protein]-peptidylproline (omega=180) = [protein]-peptidylproline (omega=0). Involved in protein export. Acts as a chaperone by maintaining the newly synthesized protein in an open conformation. Functions as a peptidyl-prolyl cis-trans isomerase. This Rickettsia massiliae (strain Mtu5) protein is Trigger factor.